The following is a 478-amino-acid chain: PTS system mannitol-specific EIICB component (478 aa).

At 1–29 the chain is on the cytoplasmic side; sequence MQQQEQQQGGMKVKVQRFGSYLSGMIMPN. The region spanning 18–347 is the PTS EIIC type-2 domain; the sequence is FGSYLSGMIM…VILKSSKASE (330 aa). A helical transmembrane segment spans residues 30–51; sequence IGAFIAWGIITALFIPAGWFPN. The Extracellular segment spans residues 52–55; that stretch reads EQLN. The helical transmembrane segment at 56–76 threads the bilayer; the sequence is TLVSPMITYLLPLLIAYTGGK. The Cytoplasmic portion of the chain corresponds to 77–139; it reads MIYDHRGGVV…QGFEMLINNF (63 aa). Residues 140 to 161 traverse the membrane as a helical segment; that stretch reads TAGIVGAALTILAFYAIGPVVL. Topologically, residues 162-170 are extracellular; sequence TLNKLLAAG. A helical membrane pass occupies residues 171–191; the sequence is VEVIVHANLLPVASVFVEPAK. At 192–278 the chain is on the cytoplasmic side; that stretch reads VLFLNNAINH…ILMKPALILA (87 aa). A helical membrane pass occupies residues 279 to 298; sequence AIAGGASGLLTFTIFNAGLV. The Extracellular portion of the chain corresponds to 299 to 318; the sequence is AAASPGSIIALMAMTPRGGY. The chain crosses the membrane as a helical span at residues 319–340; it reads FGVLAGVLVAAAVSFIVSAVIL. Over 341–478 the chain is Cytoplasmic; the sequence is KSSKASEEDL…YDELIEKLKK (138 aa). Residues 390–478 form the PTS EIIB type-2 domain; the sequence is NKIIFACDAG…YDELIEKLKK (89 aa). C396 serves as the catalytic Phosphocysteine intermediate; for EIIB activity. The residue at position 396 (C396) is a Phosphocysteine; by EIIA.

As to quaternary structure, homodimer.

The protein localises to the cell membrane. The catalysed reaction is D-mannitol(out) + N(pros)-phospho-L-histidyl-[protein] = D-mannitol 1-phosphate(in) + L-histidyl-[protein]. Its function is as follows. The phosphoenolpyruvate-dependent sugar phosphotransferase system (sugar PTS), a major carbohydrate active transport system, catalyzes the phosphorylation of incoming sugar substrates concomitantly with their translocation across the cell membrane. The enzyme II CmtAB PTS system is involved in D-mannitol transport. In Bacillus subtilis (strain 168), this protein is PTS system mannitol-specific EIICB component.